The chain runs to 279 residues: MADS-box transcription factor PHERES 1 (279 aa).

The 60-residue stretch at 1-60 (MRGKMKLSFIENDSVRKTTFTKRKKGMLKKFNELVTLCGVDACAVIRSPYNSIQEPWPSR) folds into the MADS-box domain.

In terms of assembly, interacts with AGL61/DIANA and AGL62. As to expression, male gametophyte, embryo and endosperm.

It is found in the nucleus. Its function is as follows. Probable transcription factor involved in the development of gametophytes and seeds. This is MADS-box transcription factor PHERES 1 (PHE1) from Arabidopsis thaliana (Mouse-ear cress).